A 317-amino-acid chain; its full sequence is D-alanine--D-alanine ligase (317 aa).

The region spanning 111-308 is the ATP-grasp domain; that stretch reads KRFWNGIGIP…YASLVEKIAQ (198 aa). 137 to 192 is an ATP binding site; it reads EEQMSYPVIVKPSREGSTIGINKAMNRAELDDALIKALEYDSDILVEEFIDGPEFT. Residues aspartate 262, glutamate 275, and asparagine 277 each coordinate Mg(2+).

Belongs to the D-alanine--D-alanine ligase family. The cofactor is Mg(2+). Mn(2+) is required as a cofactor.

It is found in the cytoplasm. It catalyses the reaction 2 D-alanine + ATP = D-alanyl-D-alanine + ADP + phosphate + H(+). It participates in cell wall biogenesis; peptidoglycan biosynthesis. Its function is as follows. Cell wall formation. The chain is D-alanine--D-alanine ligase from Marinomonas sp. (strain MWYL1).